The primary structure comprises 189 residues: Photosystem I assembly protein Ycf4 (189 aa).

Transmembrane regions (helical) follow at residues 25 to 45 (SVYF…LAGL) and 62 to 82 (LVFI…SLAG).

Belongs to the Ycf4 family.

Its subcellular location is the cellular thylakoid membrane. Seems to be required for the assembly of the photosystem I complex. The protein is Photosystem I assembly protein Ycf4 of Synechococcus sp. (strain JA-3-3Ab) (Cyanobacteria bacterium Yellowstone A-Prime).